We begin with the raw amino-acid sequence, 412 residues long: Multidrug resistance protein MdtA (412 aa).

The signal sequence occupies residues 1–21; it reads MKGSNIRRWGAALAVVIIAGA. 2 disordered regions span residues 33–53 and 389–412; these read GSGA…RHGR and VVTA…GARS.

It belongs to the membrane fusion protein (MFP) (TC 8.A.1) family. In terms of assembly, part of a tripartite efflux system composed of MdtA, MdtB and MdtC.

The protein localises to the cell inner membrane. The polypeptide is Multidrug resistance protein MdtA (Klebsiella pneumoniae subsp. pneumoniae (strain ATCC 700721 / MGH 78578)).